The following is a 103-amino-acid chain: Cytotoxin-like protein TA-BMBGT3 (103 aa).

An N-terminal signal peptide occupies residues 1–21 (MKTLLLTLVVVTIICLDLGYT). 5 cysteine pairs are disulfide-bonded: cysteine 24/cysteine 45, cysteine 27/cysteine 37, cysteine 38/cysteine 72, cysteine 76/cysteine 90, and cysteine 91/cysteine 96.

This sequence belongs to the three-finger toxin family. Ancestral subfamily. Orphan group XVII sub-subfamily. As to expression, expressed by the venom gland.

It localises to the secreted. The protein is Cytotoxin-like protein TA-BMBGT3 of Bungarus multicinctus (Many-banded krait).